The following is a 606-amino-acid chain: Arginine--tRNA ligase (606 aa).

The short motif at 126–136 is the 'HIGH' region element; it reads PNTNKPLHLGH.

It belongs to the class-I aminoacyl-tRNA synthetase family. As to quaternary structure, monomer.

The protein localises to the cytoplasm. It catalyses the reaction tRNA(Arg) + L-arginine + ATP = L-arginyl-tRNA(Arg) + AMP + diphosphate. This Phocaeicola vulgatus (strain ATCC 8482 / DSM 1447 / JCM 5826 / CCUG 4940 / NBRC 14291 / NCTC 11154) (Bacteroides vulgatus) protein is Arginine--tRNA ligase.